We begin with the raw amino-acid sequence, 481 residues long: UDP-glycosyltransferase 72E3 (481 aa).

The active-site Proton acceptor is the His18. An anthocyanidin is bound at residue His18. The active-site Charge relay is the Asp111. 6 residues coordinate UDP-alpha-D-glucose: Ala346, Gln348, His363, Trp366, Ser368, and Glu371. Position 386 (Ala386) interacts with an anthocyanidin. Residues Glu387 and Gln388 each coordinate UDP-alpha-D-glucose.

It belongs to the UDP-glycosyltransferase family. Expressed in seedlings and roots, and at lower levels in flowers and siliques.

The catalysed reaction is (E)-4-coumarate + UDP-alpha-D-glucose = 4-O-(beta-D-glucosyl)-trans-4-coumarate + UDP + H(+). It carries out the reaction (E)-sinapyl alcohol + UDP-alpha-D-glucose = 4-O-(beta-D-glucosyl)-trans-4-sinapoyl alcohol + UDP + H(+). It catalyses the reaction (E)-coniferol + UDP-alpha-D-glucose = 4-O-(beta-D-glucosyl)-(E)-coniferol + UDP + H(+). The enzyme catalyses (E)-sinapate + UDP-alpha-D-glucose = 4-O-(beta-D-glucosyl)-trans-sinapate + UDP + H(+). The catalysed reaction is (E)-coniferaldehyde + UDP-alpha-D-glucose = 4-O-(beta-D-glucosyl)-4-(E)-coniferyl aldehyde + UDP + H(+). It carries out the reaction (E)-sinapaldehyde + UDP-alpha-D-glucose = 4-O-(beta-D-glucosyl)-4-trans-sinapoyl aldehyde + UDP + H(+). Functionally, involved in the O-glucosylation of monolignols (alcohol monomers of lignin). Glucosylates coniferyl alcohol to form coniferyl alcohol 4-O-glucoside. Glucosylates sinapyl alcohol to form sinapyl alcohol 4-O-glucoside. Possesses low activity with sinapate as substrate. This is UDP-glycosyltransferase 72E3 from Arabidopsis thaliana (Mouse-ear cress).